The chain runs to 109 residues: Cell division protein ZapA (109 aa).

Residues 22–99 (EQQDALNMAA…IEQALLEQGR (78 aa)) are a coiled coil.

This sequence belongs to the ZapA family. Type 1 subfamily. In terms of assembly, homodimer. Interacts with FtsZ.

Its subcellular location is the cytoplasm. Functionally, activator of cell division through the inhibition of FtsZ GTPase activity, therefore promoting FtsZ assembly into bundles of protofilaments necessary for the formation of the division Z ring. It is recruited early at mid-cell but it is not essential for cell division. The protein is Cell division protein ZapA of Yersinia enterocolitica serotype O:8 / biotype 1B (strain NCTC 13174 / 8081).